Reading from the N-terminus, the 370-residue chain is 2-oxoisovalerate dehydrogenase subunit beta, mitochondrial (370 aa).

A mitochondrion-targeting transit peptide spans 1-25; the sequence is MLRGNNIKKVNSLLVRSFHSTVGNR. Thiamine diphosphate is bound at residue tyrosine 130. K(+) contacts are provided by glycine 156, leucine 158, threonine 159, and glutamate 209.

In terms of assembly, heterotetramer of 2 alpha and 2 beta chains. Thiamine diphosphate serves as cofactor.

The protein resides in the mitochondrion matrix. It catalyses the reaction N(6)-[(R)-lipoyl]-L-lysyl-[protein] + 3-methyl-2-oxobutanoate + H(+) = N(6)-[(R)-S(8)-2-methylpropanoyldihydrolipoyl]-L-lysyl-[protein] + CO2. In terms of biological role, the branched-chain alpha-keto dehydrogenase complex catalyzes the overall conversion of alpha-keto acids to acyl-CoA and CO(2). It contains multiple copies of three enzymatic components: branched-chain alpha-keto acid decarboxylase (E1), lipoamide acyltransferase (E2) and lipoamide dehydrogenase (E3). The polypeptide is 2-oxoisovalerate dehydrogenase subunit beta, mitochondrial (bkdB) (Dictyostelium discoideum (Social amoeba)).